The primary structure comprises 219 residues: Ribose-5-phosphate isomerase A (219 aa).

Substrate contacts are provided by residues 28-31, 81-84, and 94-97; these read TGST, DGAD, and KGGG. Glutamate 103 (proton acceptor) is an active-site residue. Lysine 121 is a binding site for substrate.

The protein belongs to the ribose 5-phosphate isomerase family. Homodimer.

The catalysed reaction is aldehydo-D-ribose 5-phosphate = D-ribulose 5-phosphate. The protein operates within carbohydrate degradation; pentose phosphate pathway; D-ribose 5-phosphate from D-ribulose 5-phosphate (non-oxidative stage): step 1/1. Catalyzes the reversible conversion of ribose-5-phosphate to ribulose 5-phosphate. This chain is Ribose-5-phosphate isomerase A, found in Nitrosomonas europaea (strain ATCC 19718 / CIP 103999 / KCTC 2705 / NBRC 14298).